A 483-amino-acid polypeptide reads, in one-letter code: Protein FIZZY-RELATED 2 (483 aa).

A disordered region spans residues 1-28 (MEEEDPTASNVITNSNSSSMRNLSPAMN). Positions 7 to 28 (TASNVITNSNSSSMRNLSPAMN) are enriched in polar residues. 7 WD repeats span residues 174 to 211 (QDDF…VTKL), 215 to 254 (GAED…RTRT), 257 to 294 (GHRL…DHVS), 298 to 337 (GHKS…PVLK), 340 to 382 (EHTA…HLSS), 384 to 425 (DTCS…KIAT), and 428 to 467 (GHTY…KSQN).

This sequence belongs to the WD repeat CDC20/Fizzy family. Associates with the APC/C complex. Interacts with CDC20-1, CDC20-2, CYCA1-1, CYCA1-2, CYCA3-4, CYCB1-1 and CYCB1-2. Binds to GIG1 and PYM. Expressed in seedlings, flowers, leaves and roots. Expressed in the differentiating cell files of the root elongation zone.

It localises to the nucleus. It participates in protein modification; protein ubiquitination. Its function is as follows. Activator protein that regulates the ubiquitin ligase activity and substrate specificity of the anaphase promoting complex/cyclosome (APC/C). Necessary and sufficient for endoreduplication and correct cell expansion. Controls meristem size by stimulating endoreduplication in the elongation zone. This Arabidopsis thaliana (Mouse-ear cress) protein is Protein FIZZY-RELATED 2 (FZR2).